A 37-amino-acid chain; its full sequence is Large ribosomal subunit protein bL36c (37 aa).

Belongs to the bacterial ribosomal protein bL36 family.

The protein resides in the plastid. It localises to the chloroplast. This Thalassiosira pseudonana (Marine diatom) protein is Large ribosomal subunit protein bL36c.